We begin with the raw amino-acid sequence, 552 residues long: Glutamyl-tRNA reductase 1, chloroplastic (552 aa).

Substrate-binding positions include 150-153 (TCNR), Ser-210, 215-217 (EGQ), and Gln-221. The Nucleophile role is filled by Cys-151. 292–297 (GAGKMG) is an NADP(+) binding site.

Belongs to the glutamyl-tRNA reductase family. Primarily in cotyledons and hypocotyls of greening cucumber seedlings.

It is found in the plastid. The protein localises to the chloroplast. It catalyses the reaction (S)-4-amino-5-oxopentanoate + tRNA(Glu) + NADP(+) = L-glutamyl-tRNA(Glu) + NADPH + H(+). It participates in porphyrin-containing compound metabolism; protoporphyrin-IX biosynthesis; 5-aminolevulinate from L-glutamyl-tRNA(Glu): step 1/2. Catalyzes the NADPH-dependent reduction of glutamyl-tRNA(Glu) to glutamate 1-semialdehyde (GSA). This chain is Glutamyl-tRNA reductase 1, chloroplastic (HEMA1), found in Cucumis sativus (Cucumber).